Reading from the N-terminus, the 336-residue chain is DNA-directed RNA polymerase subunit alpha (336 aa).

The alpha N-terminal domain (alpha-NTD) stretch occupies residues 1–234; that stretch reads MIEFVIPKKL…NHFKIVTEGL (234 aa). Residues 269–336 form an alpha C-terminal domain (alpha-CTD) region; that stretch reads VYNRKIDELE…KFGLELRKGE (68 aa).

The protein belongs to the RNA polymerase alpha chain family. Homodimer. The RNAP catalytic core consists of 2 alpha, 1 beta, 1 beta' and 1 omega subunit. When a sigma factor is associated with the core the holoenzyme is formed, which can initiate transcription.

It carries out the reaction RNA(n) + a ribonucleoside 5'-triphosphate = RNA(n+1) + diphosphate. Functionally, DNA-dependent RNA polymerase catalyzes the transcription of DNA into RNA using the four ribonucleoside triphosphates as substrates. This is DNA-directed RNA polymerase subunit alpha from Thermotoga petrophila (strain ATCC BAA-488 / DSM 13995 / JCM 10881 / RKU-1).